An 82-amino-acid polypeptide reads, in one-letter code: Lectin-D2 (82 aa).

Chitin-binding type-1 domains lie at 1-42 (APEC…QCDY) and 43-82 (WRCG…SQCD). 4 cysteine pairs are disulfide-bonded: Cys4–Cys19, Cys13–Cys25, Cys18–Cys32, and Cys36–Cys40. Residues Ser20, Trp22, Tyr24, and Tyr31 each contribute to the a carbohydrate site. Position 43 (Trp43) interacts with a carbohydrate. Intrachain disulfides connect Cys45-Cys60, Cys54-Cys66, Cys59-Cys73, and Cys77-Cys81. Residues Ser61, Tyr63, Trp65, and His72 each coordinate a carbohydrate.

As to quaternary structure, monomer.

Its function is as follows. N-acetyl-D-glucosamine binding lectin. Shows no hemagglutinating activity towards rabbit erythrocytes and weak activity towards trypsin-treated erythrocytes. Has mitogenic activity towards human peripheral blood lymphocytes (HPBL). This chain is Lectin-D2, found in Phytolacca americana (American pokeweed).